The following is a 590-amino-acid chain: Aspartate--tRNA(Asp/Asn) ligase (590 aa).

Residue Glu-173 coordinates L-aspartate. The interval Gln-197 to Lys-200 is aspartate. Arg-219 contributes to the L-aspartate binding site. ATP contacts are provided by residues Arg-219–Glu-221 and Gln-228. His-450 provides a ligand contact to L-aspartate. Glu-484 is an ATP binding site. Position 491 (Arg-491) interacts with L-aspartate. ATP is bound at residue Gly-536–Arg-539.

The protein belongs to the class-II aminoacyl-tRNA synthetase family. Type 1 subfamily. Homodimer.

The protein localises to the cytoplasm. The catalysed reaction is tRNA(Asx) + L-aspartate + ATP = L-aspartyl-tRNA(Asx) + AMP + diphosphate. Aspartyl-tRNA synthetase with relaxed tRNA specificity since it is able to aspartylate not only its cognate tRNA(Asp) but also tRNA(Asn). Reaction proceeds in two steps: L-aspartate is first activated by ATP to form Asp-AMP and then transferred to the acceptor end of tRNA(Asp/Asn). The sequence is that of Aspartate--tRNA(Asp/Asn) ligase from Coxiella burnetii (strain RSA 493 / Nine Mile phase I).